Here is a 396-residue protein sequence, read N- to C-terminus: Probable peptidoglycan glycosyltransferase FtsW (396 aa).

At 1 to 27 (MPFLDKVKQQYEDWTRITPSNLLYDRA) the chain is on the cytoplasmic side. Residues 28 to 48 (LLLLFFVLLLIGLLAVSSASI) traverse the membrane as a helical segment. Residues 49–64 (PVGTRLFKDPFYFAKR) are Periplasmic-facing. The helical transmembrane segment at 65-85 (DAIYVFLSCVTCYLCVQVPME) threads the bilayer. Over 86–93 (KWEQWHVR) the chain is Cytoplasmic. Residues 94–114 (LFAFAIFLLILVLIPGIGLSV) form a helical membrane-spanning segment. At 115 to 122 (NGARRWIP) the chain is on the periplasmic side. The helical transmembrane segment at 123–143 (MVLFNFQPAEFAKLALTCFLA) threads the bilayer. Topologically, residues 144 to 157 (SYFTRKYDEVRSRK) are cytoplasmic. The chain crosses the membrane as a helical span at residues 158-178 (LSAFKPFALMGLMGLFLLSQP). Residues 179–183 (DLGST) are Periplasmic-facing. The next 2 helical transmembrane spans lie at 184 to 204 (VVLFVITFGLLFIVGANFWQF) and 205 to 225 (VGLMAFGGLLFVWLVLSSAYR). Residues 226 to 285 (LKRFTGFLDPFKDPYGTGFQLSNSLMAFGRGEWVGEGLGNSIQKLEYLPEAHTDFVMAVV) lie on the Periplasmic side of the membrane. Residues 286–306 (GEEFGFLGILVIVILLGLLIF) traverse the membrane as a helical segment. Residues 307-323 (RAMKIGRESLLLEQRFK) lie on the Cytoplasmic side of the membrane. A helical membrane pass occupies residues 324-344 (GFFAFGISFWIFFQGFVNLGM). At 345 to 355 (SLGLLPTKGLT) the chain is on the periplasmic side. Residues 356–376 (FPLISYGGSSLIIMSMTIGLL) traverse the membrane as a helical segment. The Cytoplasmic portion of the chain corresponds to 377 to 396 (LRIDHENRLMRIGQARLRDD).

The protein belongs to the SEDS family. FtsW subfamily.

The protein resides in the cell inner membrane. The enzyme catalyses [GlcNAc-(1-&gt;4)-Mur2Ac(oyl-L-Ala-gamma-D-Glu-L-Lys-D-Ala-D-Ala)](n)-di-trans,octa-cis-undecaprenyl diphosphate + beta-D-GlcNAc-(1-&gt;4)-Mur2Ac(oyl-L-Ala-gamma-D-Glu-L-Lys-D-Ala-D-Ala)-di-trans,octa-cis-undecaprenyl diphosphate = [GlcNAc-(1-&gt;4)-Mur2Ac(oyl-L-Ala-gamma-D-Glu-L-Lys-D-Ala-D-Ala)](n+1)-di-trans,octa-cis-undecaprenyl diphosphate + di-trans,octa-cis-undecaprenyl diphosphate + H(+). Its pathway is cell wall biogenesis; peptidoglycan biosynthesis. Its function is as follows. Peptidoglycan polymerase that is essential for cell division. The protein is Probable peptidoglycan glycosyltransferase FtsW of Pasteurella multocida (strain Pm70).